The following is a 449-amino-acid chain: Phosphoglucosamine mutase (449 aa).

Ser104 serves as the catalytic Phosphoserine intermediate. Residues Ser104, Asp243, Asp245, and Asp247 each coordinate Mg(2+). The residue at position 104 (Ser104) is a Phosphoserine.

It belongs to the phosphohexose mutase family. The cofactor is Mg(2+). In terms of processing, activated by phosphorylation.

It carries out the reaction alpha-D-glucosamine 1-phosphate = D-glucosamine 6-phosphate. Functionally, catalyzes the conversion of glucosamine-6-phosphate to glucosamine-1-phosphate. This Xanthomonas oryzae pv. oryzae (strain PXO99A) protein is Phosphoglucosamine mutase.